A 1141-amino-acid chain; its full sequence is Collagen alpha-1(XXVIII) chain (1141 aa).

Positions 1 to 20 (MRRRDVAFCLLLLPAFMTQA) are cleaved as a signal peptide. Positions 48 to 227 (DVVFILDSSE…TLVDRIQERL (180 aa)) constitute a VWFA 1 domain. The interval 242–770 (CEKGEPGDPG…KQGLQGPKGD (529 aa)) is disordered. Collagen-like domains lie at 243-300 (EKGE…RGEC), 301-358 (GKPG…GAPG), 501-544 (GPKG…MPGK), 545-588 (GQPG…MPGA), and 733-769 (GQKG…GPKG). Over residues 291–311 (KGDKGERGECGKPGMKGDKGP) the composition is skewed to basic and acidic residues. Residues 335-344 (PKGFQGNKGE) show a composition bias toward low complexity. A compositionally biased stretch (pro residues) spans 345 to 356 (PGPPGPYGPPGA). Residues 735–753 (KGEHGDRGDVGRKGEKGET) show a composition bias toward basic and acidic residues. A VWFA 2 domain is found at 798 to 976 (ELVFVIDSSE…TLQDTLKQKL (179 aa)). A BPTI/Kunitz inhibitor domain is found at 1088-1138 (CEEALKPGECGDYVVRWYYDKQVNSCARFWFSGCNGSGNRFHSEKECRETC). 3 disulfides stabilise this stretch: Cys1088–Cys1138, Cys1097–Cys1121, and Cys1113–Cys1134.

The protein belongs to the VWA-containing collagen family. In terms of assembly, trimer or homomer. Secreted into as a 135 kDa monomer under reducing conditions and as a homotrimer under non-reducing conditions. As to expression, expressed in skin, intestine, sternum, brain and kidney. Lower expression is also observed in heart, lung, sciatic nerve, dorsal root ganglia, peripheral nerves and calvaria of newborn mice and in intestine and brain of adult mice. Found in basement membrane surrounding a particular subset of Schwann cells in adult sciatic nerve.

Its subcellular location is the secreted. The protein resides in the extracellular space. The protein localises to the extracellular matrix. It is found in the basement membrane. Functionally, may act as a cell-binding protein. The sequence is that of Collagen alpha-1(XXVIII) chain (Col28a1) from Mus musculus (Mouse).